A 145-amino-acid chain; its full sequence is Ribonuclease H (145 aa).

The RNase H type-1 domain maps to 1 to 141 (MQEVTIYSDG…ADALANRGVA (141 aa)). 4 residues coordinate Mg(2+): Asp-9, Glu-47, Asp-69, and Asp-133.

It belongs to the RNase H family. In terms of assembly, monomer. It depends on Mg(2+) as a cofactor.

It is found in the cytoplasm. The enzyme catalyses Endonucleolytic cleavage to 5'-phosphomonoester.. Functionally, endonuclease that specifically degrades the RNA of RNA-DNA hybrids. The protein is Ribonuclease H of Cupriavidus metallidurans (strain ATCC 43123 / DSM 2839 / NBRC 102507 / CH34) (Ralstonia metallidurans).